The sequence spans 617 residues: Secretogranin-2 (617 aa).

The N-terminal stretch at 1-27 (MAEAKTHWLGAALSLIPLIFLISGAEA) is a signal peptide. The propeptide occupies 28–30 (ASF). The tract at residues 120–143 (QAENEPQSAPKENKPYALNSEKNF) is disordered. Y151 is subject to Sulfotyrosine. A Phosphoserine modification is found at S174. Positions 182 to 200 (TNEIVEEQYTPQSLATLES) are O-glycosylated at one site. Basic and acidic residues-rich tracts occupy residues 257–284 (IESQ…EMKR) and 293–302 (EDLRKESKDQ). Residues 257–302 (IESQTQEEVRDSKENIEKNEQINDEMKRSGQLGIQEEDLRKESKDQ) form a disordered region. S268 is modified (phosphoserine). S432, S532, S555, and S556 each carry phosphoserine. The disordered stretch occupies residues 552 to 583 (NQGSSQETDKLAPVSKRFPVGPPKNDDTPNRQ).

This sequence belongs to the chromogranin/secretogranin protein family. As to quaternary structure, interacts with Secretogranin III/SCG3. Post-translationally, O-glycosylated.

It is found in the secreted. Neuroendocrine protein of the granin family that regulates the biogenesis of secretory granules. The protein is Secretogranin-2 (SCG2) of Homo sapiens (Human).